A 349-amino-acid chain; its full sequence is Polyamine aminopropyltransferase 2 (349 aa).

A PABS domain is found at 29-267; the sequence is DGAITAIEDS…SSWGFLLASD (239 aa). Q60 is an S-methyl-5'-thioadenosine binding site. The spermidine site is built by H91 and E115. Residues D135 and 167 to 168 each bind S-methyl-5'-thioadenosine; that span reads DG. D185 (proton acceptor) is an active-site residue. Residue P194 coordinates S-methyl-5'-thioadenosine.

The protein belongs to the spermidine/spermine synthase family. In terms of assembly, homodimer or homotetramer.

The protein localises to the cytoplasm. It carries out the reaction S-adenosyl 3-(methylsulfanyl)propylamine + putrescine = S-methyl-5'-thioadenosine + spermidine + H(+). The protein operates within amine and polyamine biosynthesis; spermidine biosynthesis; spermidine from putrescine: step 1/1. Catalyzes the irreversible transfer of a propylamine group from the amino donor S-adenosylmethioninamine (decarboxy-AdoMet) to putrescine (1,4-diaminobutane) to yield spermidine. In Pseudomonas aeruginosa (strain ATCC 15692 / DSM 22644 / CIP 104116 / JCM 14847 / LMG 12228 / 1C / PRS 101 / PAO1), this protein is Polyamine aminopropyltransferase 2.